A 134-amino-acid chain; its full sequence is Large ribosomal subunit protein bL21 (134 aa).

This sequence belongs to the bacterial ribosomal protein bL21 family. In terms of assembly, part of the 50S ribosomal subunit. Contacts protein L20.

In terms of biological role, this protein binds to 23S rRNA in the presence of protein L20. The chain is Large ribosomal subunit protein bL21 from Pelagibacter ubique (strain HTCC1062).